The sequence spans 131 residues: Small ribosomal subunit protein uS11 (131 aa).

Belongs to the universal ribosomal protein uS11 family. In terms of assembly, part of the 30S ribosomal subunit. Interacts with proteins S7 and S18. Binds to IF-3.

In terms of biological role, located on the platform of the 30S subunit, it bridges several disparate RNA helices of the 16S rRNA. Forms part of the Shine-Dalgarno cleft in the 70S ribosome. This Thermotoga neapolitana (strain ATCC 49049 / DSM 4359 / NBRC 107923 / NS-E) protein is Small ribosomal subunit protein uS11.